Consider the following 130-residue polypeptide: Small ribosomal subunit protein uS11 (130 aa).

Belongs to the universal ribosomal protein uS11 family. In terms of assembly, part of the 30S ribosomal subunit. Interacts with proteins S7 and S18. Binds to IF-3.

Located on the platform of the 30S subunit, it bridges several disparate RNA helices of the 16S rRNA. Forms part of the Shine-Dalgarno cleft in the 70S ribosome. This Shewanella denitrificans (strain OS217 / ATCC BAA-1090 / DSM 15013) protein is Small ribosomal subunit protein uS11.